A 296-amino-acid chain; its full sequence is Probable endonuclease 4 (296 aa).

His-68, His-108, Glu-145, Asp-179, His-182, His-216, Asp-229, His-231, and Glu-261 together coordinate Zn(2+).

The protein belongs to the AP endonuclease 2 family. Requires Zn(2+) as cofactor.

It catalyses the reaction Endonucleolytic cleavage to 5'-phosphooligonucleotide end-products.. Its function is as follows. Endonuclease IV plays a role in DNA repair. It cleaves phosphodiester bonds at apurinic or apyrimidinic (AP) sites, generating a 3'-hydroxyl group and a 5'-terminal sugar phosphate. In Geobacter sulfurreducens (strain ATCC 51573 / DSM 12127 / PCA), this protein is Probable endonuclease 4.